Consider the following 282-residue polypeptide: tRNA uridine(34) hydroxylase (282 aa).

Positions 128–222 (EGRPVVMLDT…YFEEVGGSHY (95 aa)) constitute a Rhodanese domain. The active-site Cysteine persulfide intermediate is Cys-182.

Belongs to the TrhO family.

It catalyses the reaction uridine(34) in tRNA + AH2 + O2 = 5-hydroxyuridine(34) in tRNA + A + H2O. Catalyzes oxygen-dependent 5-hydroxyuridine (ho5U) modification at position 34 in tRNAs. The chain is tRNA uridine(34) hydroxylase from Cupriavidus necator (strain ATCC 17699 / DSM 428 / KCTC 22496 / NCIMB 10442 / H16 / Stanier 337) (Ralstonia eutropha).